A 290-amino-acid polypeptide reads, in one-letter code: Proteasome assembly chaperone 1 (290 aa).

A disordered region spans residues 1 to 39 (MAATFFGEVVKAPCRAGTEDEEEEEEEEGRRETPEDREV). Residue A2 is modified to N-acetylalanine. T18 is modified (phosphothreonine). Over residues 28-39 (EGRRETPEDREV) the composition is skewed to basic and acidic residues. A Phosphothreonine modification is found at T56. S182 bears the Phosphoserine mark. K266 carries the post-translational modification N6-acetyllysine.

It belongs to the PSMG1 family. As to quaternary structure, forms a heterodimer with PSMG2. The PSMG1-PSMG2 heterodimer interacts directly with the PSMA5 and PSMA7 proteasome alpha subunits. Post-translationally, degraded by the proteasome upon completion of 20S proteasome maturation.

The protein resides in the cytoplasm. Its subcellular location is the endoplasmic reticulum. Its function is as follows. Chaperone protein which promotes assembly of the 20S proteasome as part of a heterodimer with PSMG2. The PSMG1-PSMG2 heterodimer binds to the PSMA5 and PSMA7 proteasome subunits, promotes assembly of the proteasome alpha subunits into the heteroheptameric alpha ring and prevents alpha ring dimerization. This Papio anubis (Olive baboon) protein is Proteasome assembly chaperone 1 (PSMG1).